Consider the following 348-residue polypeptide: Holliday junction branch migration complex subunit RuvB (348 aa).

The tract at residues Met-1–Thr-20 is disordered. The tract at residues Met-1–Tyr-183 is large ATPase domain (RuvB-L). ATP is bound by residues Leu-22, Arg-23, Gly-64, Lys-67, Thr-68, Thr-69, Glu-130–Phe-132, Arg-173, Tyr-183, and Arg-220. Thr-68 contributes to the Mg(2+) binding site. The small ATPAse domain (RuvB-S) stretch occupies residues Thr-184 to Glu-254. The tract at residues Ala-257–Ala-348 is head domain (RuvB-H). Arg-293, Arg-312, and Arg-317 together coordinate DNA.

It belongs to the RuvB family. In terms of assembly, homohexamer. Forms an RuvA(8)-RuvB(12)-Holliday junction (HJ) complex. HJ DNA is sandwiched between 2 RuvA tetramers; dsDNA enters through RuvA and exits via RuvB. An RuvB hexamer assembles on each DNA strand where it exits the tetramer. Each RuvB hexamer is contacted by two RuvA subunits (via domain III) on 2 adjacent RuvB subunits; this complex drives branch migration. In the full resolvosome a probable DNA-RuvA(4)-RuvB(12)-RuvC(2) complex forms which resolves the HJ.

Its subcellular location is the cytoplasm. The enzyme catalyses ATP + H2O = ADP + phosphate + H(+). The RuvA-RuvB-RuvC complex processes Holliday junction (HJ) DNA during genetic recombination and DNA repair, while the RuvA-RuvB complex plays an important role in the rescue of blocked DNA replication forks via replication fork reversal (RFR). RuvA specifically binds to HJ cruciform DNA, conferring on it an open structure. The RuvB hexamer acts as an ATP-dependent pump, pulling dsDNA into and through the RuvAB complex. RuvB forms 2 homohexamers on either side of HJ DNA bound by 1 or 2 RuvA tetramers; 4 subunits per hexamer contact DNA at a time. Coordinated motions by a converter formed by DNA-disengaged RuvB subunits stimulates ATP hydrolysis and nucleotide exchange. Immobilization of the converter enables RuvB to convert the ATP-contained energy into a lever motion, pulling 2 nucleotides of DNA out of the RuvA tetramer per ATP hydrolyzed, thus driving DNA branch migration. The RuvB motors rotate together with the DNA substrate, which together with the progressing nucleotide cycle form the mechanistic basis for DNA recombination by continuous HJ branch migration. Branch migration allows RuvC to scan DNA until it finds its consensus sequence, where it cleaves and resolves cruciform DNA. The protein is Holliday junction branch migration complex subunit RuvB of Bradyrhizobium sp. (strain BTAi1 / ATCC BAA-1182).